The following is a 211-amino-acid chain: MRDPVDTYMNYLIPMVVEQTNRGERSYDIFSRLLKERIIFLTGPVEDGMSTLAVAQLLFLEADNPKKEISMYINSPGGVVTSGLAIYDTMQFIKPAVSTLCIGQAASMGSLLLTAGEKDMRFALPNARIMVHQPSGGFQGQVTDIMLHAQEILNLKRRLNEIYVKHTGRSMDKIEDALERDNFMTAKAALDFGLIDAVIDQRPTDDTSKAA.

Serine 107 serves as the catalytic Nucleophile. Histidine 132 is an active-site residue.

It belongs to the peptidase S14 family. As to quaternary structure, fourteen ClpP subunits assemble into 2 heptameric rings which stack back to back to give a disk-like structure with a central cavity, resembling the structure of eukaryotic proteasomes.

Its subcellular location is the cytoplasm. The enzyme catalyses Hydrolysis of proteins to small peptides in the presence of ATP and magnesium. alpha-casein is the usual test substrate. In the absence of ATP, only oligopeptides shorter than five residues are hydrolyzed (such as succinyl-Leu-Tyr-|-NHMec, and Leu-Tyr-Leu-|-Tyr-Trp, in which cleavage of the -Tyr-|-Leu- and -Tyr-|-Trp bonds also occurs).. Functionally, cleaves peptides in various proteins in a process that requires ATP hydrolysis. Has a chymotrypsin-like activity. Plays a major role in the degradation of misfolded proteins. The chain is ATP-dependent Clp protease proteolytic subunit from Xanthobacter autotrophicus (strain ATCC BAA-1158 / Py2).